Here is a 214-residue protein sequence, read N- to C-terminus: Thymidylate kinase (214 aa).

ATP is bound at residue 10 to 17 (GGEGAGKS).

Belongs to the thymidylate kinase family.

The enzyme catalyses dTMP + ATP = dTDP + ADP. In terms of biological role, phosphorylation of dTMP to form dTDP in both de novo and salvage pathways of dTTP synthesis. This is Thymidylate kinase from Brucella suis (strain ATCC 23445 / NCTC 10510).